Reading from the N-terminus, the 744-residue chain is Phosphoribosylformylglycinamidine synthase subunit PurL (744 aa).

Residue His50 is part of the active site. Residues Tyr53 and Lys92 each contribute to the ATP site. Mg(2+) is bound at residue Glu94. Substrate contacts are provided by residues Ser95 to His98 and Arg117. The active-site Proton acceptor is His96. Mg(2+) is bound at residue Asp118. A substrate-binding site is contributed by Gln241. Asp269 serves as a coordination point for Mg(2+). Glu313–Gln315 is a binding site for substrate. Asp494 and Gly531 together coordinate ATP. Asn532 is a Mg(2+) binding site. Ser534 contacts substrate.

Belongs to the FGAMS family. As to quaternary structure, monomer. Part of the FGAM synthase complex composed of 1 PurL, 1 PurQ and 2 PurS subunits.

The protein resides in the cytoplasm. The enzyme catalyses N(2)-formyl-N(1)-(5-phospho-beta-D-ribosyl)glycinamide + L-glutamine + ATP + H2O = 2-formamido-N(1)-(5-O-phospho-beta-D-ribosyl)acetamidine + L-glutamate + ADP + phosphate + H(+). It functions in the pathway purine metabolism; IMP biosynthesis via de novo pathway; 5-amino-1-(5-phospho-D-ribosyl)imidazole from N(2)-formyl-N(1)-(5-phospho-D-ribosyl)glycinamide: step 1/2. Part of the phosphoribosylformylglycinamidine synthase complex involved in the purines biosynthetic pathway. Catalyzes the ATP-dependent conversion of formylglycinamide ribonucleotide (FGAR) and glutamine to yield formylglycinamidine ribonucleotide (FGAM) and glutamate. The FGAM synthase complex is composed of three subunits. PurQ produces an ammonia molecule by converting glutamine to glutamate. PurL transfers the ammonia molecule to FGAR to form FGAM in an ATP-dependent manner. PurS interacts with PurQ and PurL and is thought to assist in the transfer of the ammonia molecule from PurQ to PurL. The protein is Phosphoribosylformylglycinamidine synthase subunit PurL of Chelativorans sp. (strain BNC1).